The following is a 146-amino-acid chain: Histone H2A.1 (146 aa).

Residues 118-146 (SPAAAEKEAKSPKKKTSTKSPKKKVAAKE) form a disordered region. 2 consecutive short sequence motifs (SPKK motif) follow at residues 128 to 131 (SPKK) and 137 to 140 (SPKK). The span at 129–146 (PKKKTSTKSPKKKVAAKE) shows a compositional bias: basic residues.

This sequence belongs to the histone H2A family. As to quaternary structure, the nucleosome is a histone octamer containing two molecules each of H2A, H2B, H3 and H4 assembled in one H3-H4 heterotetramer and two H2A-H2B heterodimers. The octamer wraps approximately 147 bp of DNA. Phosphorylated within its C-terminal part, probably at the SPKK motifs. Expressed preferentially in meristematic tissues of young seedlings, in stigma and ovary but not in pollen.

It localises to the nucleus. It is found in the chromosome. Its function is as follows. Core component of nucleosome. Nucleosomes wrap and compact DNA into chromatin, limiting DNA accessibility to the cellular machineries which require DNA as a template. Histones thereby play a central role in transcription regulation, DNA repair, DNA replication and chromosomal stability. DNA accessibility is regulated via a complex set of post-translational modifications of histones, also called histone code, and nucleosome remodeling. This chain is Histone H2A.1 (H2A-9), found in Triticum aestivum (Wheat).